The primary structure comprises 450 residues: Probable glycine dehydrogenase (decarboxylating) subunit 1 (450 aa).

This sequence belongs to the GcvP family. N-terminal subunit subfamily. The glycine cleavage system is composed of four proteins: P, T, L and H. In this organism, the P 'protein' is a heterodimer of two subunits.

It carries out the reaction N(6)-[(R)-lipoyl]-L-lysyl-[glycine-cleavage complex H protein] + glycine + H(+) = N(6)-[(R)-S(8)-aminomethyldihydrolipoyl]-L-lysyl-[glycine-cleavage complex H protein] + CO2. Its function is as follows. The glycine cleavage system catalyzes the degradation of glycine. The P protein binds the alpha-amino group of glycine through its pyridoxal phosphate cofactor; CO(2) is released and the remaining methylamine moiety is then transferred to the lipoamide cofactor of the H protein. This Brevibacillus brevis (strain 47 / JCM 6285 / NBRC 100599) protein is Probable glycine dehydrogenase (decarboxylating) subunit 1.